Here is a 153-residue protein sequence, read N- to C-terminus: Protein eva-1 homolog A (153 aa).

Residues 37–57 traverse the membrane as a helical segment; sequence ALYFVCGVCLGLVLTLIALVV. The segment at 66-97 is disordered; it reads KTQQAPKKTGKTVENTSDTSDSDSDWDNTSDL.

Belongs to the EVA1 family.

The protein localises to the endoplasmic reticulum membrane. It localises to the lysosome membrane. Acts as a regulator of programmed cell death, mediating both autophagy and apoptosis. In Danio rerio (Zebrafish), this protein is Protein eva-1 homolog A (Eva1a).